A 541-amino-acid polypeptide reads, in one-letter code: tRNA uridine(34) acetyltransferase (541 aa).

The radical S-adenosyl-L-methionine (rSAM) stretch occupies residues 76–336; it reads KPVRTISGVA…GEYKPYREEE (261 aa). One can recognise a Radical SAM core domain in the interval 79-350; that stretch reads RTISGVAVVA…ISYAKSIMPK (272 aa). The [4Fe-4S] cluster site is built by cysteine 96, cysteine 101, and cysteine 104. Acetyl-CoA-binding positions include lysine 156, 467–470, 491–493, and tyrosine 524; these read QLHV and YGR. An N-acetyltransferase domain is found at 401–541; it reads VMYKKGIMPD…VGAYMGKYLE (141 aa).

Belongs to the ELP3 family. It depends on [4Fe-4S] cluster as a cofactor.

It carries out the reaction uridine(34) in tRNA + acetyl-CoA + S-adenosyl-L-methionine + H2O = 5-(carboxymethyl)uridine(34) in tRNA + 5'-deoxyadenosine + L-methionine + CoA + 2 H(+). The protein operates within tRNA modification. TRNA uridine(34) acetyltransferase, which mediates formation of carboxymethyluridine in the wobble base at position 34 in tRNAs. The proposed mechanism is the following: (i) recruits S-adenosyl-L-methionine and cleaves it to generate a 5'-deoxyadenosine radical (5'-dA) in the radical S-adenosyl-L-methionine (rSAM) region, (ii) hydrolyzes acetyl-CoA in the N-acetyltransferase domain and (iii) an acetyl radical is formed by the products of the two domains and (iv) is transferred onto the C5 position of uridine(34) in the bound tRNA molecule. Does not show protein lysine acetyltransferase activity. This Methanocaldococcus jannaschii (strain ATCC 43067 / DSM 2661 / JAL-1 / JCM 10045 / NBRC 100440) (Methanococcus jannaschii) protein is tRNA uridine(34) acetyltransferase.